A 97-amino-acid chain; its full sequence is Co-chaperonin GroES (97 aa).

The protein belongs to the GroES chaperonin family. In terms of assembly, heptamer of 7 subunits arranged in a ring. Interacts with the chaperonin GroEL.

The protein resides in the cytoplasm. Its function is as follows. Together with the chaperonin GroEL, plays an essential role in assisting protein folding. The GroEL-GroES system forms a nano-cage that allows encapsulation of the non-native substrate proteins and provides a physical environment optimized to promote and accelerate protein folding. GroES binds to the apical surface of the GroEL ring, thereby capping the opening of the GroEL channel. The protein is Co-chaperonin GroES of Yersinia enterocolitica.